Here is a 46-residue protein sequence, read N- to C-terminus: Large ribosomal subunit protein bL34 (46 aa).

The protein belongs to the bacterial ribosomal protein bL34 family.

This chain is Large ribosomal subunit protein bL34, found in Synechococcus sp. (strain JA-2-3B'a(2-13)) (Cyanobacteria bacterium Yellowstone B-Prime).